The following is a 149-amino-acid chain: Transcriptional repressor NrdR (149 aa).

A zinc finger spans residues 3 to 34 (CPFCFAVDTKVIDSRLVGGGSSVRRRRQCLVC). In terms of domain architecture, ATP-cone spans 49–139 (PRVVKSNDVR…VYRSFEDIKE (91 aa)).

The protein belongs to the NrdR family. Requires Zn(2+) as cofactor.

In terms of biological role, negatively regulates transcription of bacterial ribonucleotide reductase nrd genes and operons by binding to NrdR-boxes. This Shigella boydii serotype 18 (strain CDC 3083-94 / BS512) protein is Transcriptional repressor NrdR.